An 89-amino-acid polypeptide reads, in one-letter code: UPF0223 protein BAMEG_4214 (89 aa).

It belongs to the UPF0223 family.

The chain is UPF0223 protein BAMEG_4214 from Bacillus anthracis (strain CDC 684 / NRRL 3495).